We begin with the raw amino-acid sequence, 435 residues long: D-inositol 3-phosphate glycosyltransferase (435 aa).

Histidine 16 contributes to the 1D-myo-inositol 3-phosphate binding site. UDP-N-acetyl-alpha-D-glucosamine contacts are provided by residues 22–23 (QP) and glycine 30. 1D-myo-inositol 3-phosphate-binding positions include 27–32 (DAGGMN), lysine 85, tyrosine 118, threonine 142, and arginine 162. UDP-N-acetyl-alpha-D-glucosamine contacts are provided by arginine 237, lysine 242, and valine 303. Residues tyrosine 312, arginine 313, and alanine 315 each contribute to the Mg(2+) site. UDP-N-acetyl-alpha-D-glucosamine-binding residues include glutamate 325 and glutamate 333. Residue threonine 339 coordinates Mg(2+).

The protein belongs to the glycosyltransferase group 1 family. MshA subfamily. Homodimer.

The enzyme catalyses 1D-myo-inositol 3-phosphate + UDP-N-acetyl-alpha-D-glucosamine = 1D-myo-inositol 2-acetamido-2-deoxy-alpha-D-glucopyranoside 3-phosphate + UDP + H(+). In terms of biological role, catalyzes the transfer of a N-acetyl-glucosamine moiety to 1D-myo-inositol 3-phosphate to produce 1D-myo-inositol 2-acetamido-2-deoxy-glucopyranoside 3-phosphate in the mycothiol biosynthesis pathway. This chain is D-inositol 3-phosphate glycosyltransferase, found in Kineococcus radiotolerans (strain ATCC BAA-149 / DSM 14245 / SRS30216).